Consider the following 1052-residue polypeptide: Kruppel-like factor 18 (1052 aa).

3 C2H2-type zinc fingers span residues 964 to 988, 994 to 1018, and 1024 to 1046; these read YVCTYEDCKMSYSKACHLRTHMRKH, YVCDVEGCTWKFARSDELNRHKKRH, and YLCSICSKNFARSDHLKQHAKVH.

Belongs to the krueppel C2H2-type zinc-finger protein family.

The protein resides in the nucleus. This chain is Kruppel-like factor 18, found in Homo sapiens (Human).